Here is a 732-residue protein sequence, read N- to C-terminus: 1,4-alpha-glucan branching enzyme GlgB 1 (732 aa).

Asp411 acts as the Nucleophile in catalysis. Residue Glu464 is the Proton donor of the active site.

Belongs to the glycosyl hydrolase 13 family. GlgB subfamily. In terms of assembly, monomer.

The enzyme catalyses Transfers a segment of a (1-&gt;4)-alpha-D-glucan chain to a primary hydroxy group in a similar glucan chain.. The protein operates within glycan biosynthesis; glycogen biosynthesis. Catalyzes the formation of the alpha-1,6-glucosidic linkages in glycogen by scission of a 1,4-alpha-linked oligosaccharide from growing alpha-1,4-glucan chains and the subsequent attachment of the oligosaccharide to the alpha-1,6 position. The chain is 1,4-alpha-glucan branching enzyme GlgB 1 from Xanthomonas oryzae pv. oryzae (strain KACC10331 / KXO85).